The sequence spans 550 residues: (+)-germacrene D synthase (550 aa).

Mg(2+) is bound by residues Asp304, Asp308, and Glu455. The short motif at 304-308 (DDIYD) is the DDXXD motif element.

Belongs to the terpene synthase family. Tpsa subfamily. Mg(2+) serves as cofactor. Requires Mn(2+) as cofactor. It depends on Co(2+) as a cofactor. Ni(2+) is required as a cofactor.

The protein localises to the cytoplasm. The enzyme catalyses (2E,6E)-farnesyl diphosphate = (+)-germacrene D + diphosphate. It participates in secondary metabolite biosynthesis; terpenoid biosynthesis. Its function is as follows. Involved in the biosynthesis of germacrene D. Can use farnesyl diphosphate as substrate, but not geranyl diphosphate. Produces mainly (+)-germacrene D along with germacrene B and a number of minor by-products. This chain is (+)-germacrene D synthase, found in Zingiber officinale (Ginger).